A 486-amino-acid polypeptide reads, in one-letter code: NADH-quinone oxidoreductase subunit N (486 aa).

13 helical membrane-spanning segments follow: residues isoleucine 5 to leucine 25, leucine 41 to phenylalanine 61, glycine 77 to methionine 97, serine 118 to leucine 138, tyrosine 165 to glycine 185, phenylalanine 209 to phenylalanine 229, threonine 245 to alanine 265, leucine 275 to isoleucine 295, isoleucine 304 to valine 324, valine 335 to methionine 355, alanine 380 to phenylalanine 400, glycine 413 to leucine 433, and valine 458 to phenylalanine 478.

It belongs to the complex I subunit 2 family. In terms of assembly, NDH-1 is composed of 14 different subunits. Subunits NuoA, H, J, K, L, M, N constitute the membrane sector of the complex.

The protein localises to the cell inner membrane. It carries out the reaction a quinone + NADH + 5 H(+)(in) = a quinol + NAD(+) + 4 H(+)(out). NDH-1 shuttles electrons from NADH, via FMN and iron-sulfur (Fe-S) centers, to quinones in the respiratory chain. The immediate electron acceptor for the enzyme in this species is believed to be ubiquinone. Couples the redox reaction to proton translocation (for every two electrons transferred, four hydrogen ions are translocated across the cytoplasmic membrane), and thus conserves the redox energy in a proton gradient. The chain is NADH-quinone oxidoreductase subunit N from Bdellovibrio bacteriovorus (strain ATCC 15356 / DSM 50701 / NCIMB 9529 / HD100).